The chain runs to 190 residues: Secretory phospholipase A2 (190 aa).

The first 15 residues, 1-15, serve as a signal peptide directing secretion; that stretch reads MKLAYFSSLLPLALA. C62 and C78 form a disulfide bridge. A Ca(2+)-binding site is contributed by A65. H81 is an active-site residue. D82 is a Ca(2+) binding site.

This sequence belongs to the phospholipase A2 family. Ca(2+) serves as cofactor.

The protein resides in the lipid droplet. Its subcellular location is the secreted. The catalysed reaction is a 1,2-diacyl-sn-glycero-3-phosphocholine + H2O = a 1-acyl-sn-glycero-3-phosphocholine + a fatty acid + H(+). Functionally, secretory phospholipase that catalyzes the calcium-dependent hydrolysis of the 2-acyl groups in 3-sn-phosphoglycerides. Increases the ability to utilize insect-derived nutrients and lipids, and promotes lipid dropplets accumulation. Plays a role in virulence, including more efficient penetration of the insect cuticle and evasion of host immune response by repressing the expression of host immunity genes. The sequence is that of Secretory phospholipase A2 from Beauveria bassiana (strain ARSEF 2860) (White muscardine disease fungus).